Consider the following 358-residue polypeptide: DNA polymerase IV (358 aa).

Residues 4 to 185 enclose the UmuC domain; sequence IIHIDMDCYF…LSLRKIPGVG (182 aa). Mg(2+) contacts are provided by Asp-8 and Asp-103. Residue Glu-104 is part of the active site.

This sequence belongs to the DNA polymerase type-Y family. As to quaternary structure, monomer. Mg(2+) is required as a cofactor.

It is found in the cytoplasm. It catalyses the reaction DNA(n) + a 2'-deoxyribonucleoside 5'-triphosphate = DNA(n+1) + diphosphate. Functionally, poorly processive, error-prone DNA polymerase involved in untargeted mutagenesis. Copies undamaged DNA at stalled replication forks, which arise in vivo from mismatched or misaligned primer ends. These misaligned primers can be extended by PolIV. Exhibits no 3'-5' exonuclease (proofreading) activity. May be involved in translesional synthesis, in conjunction with the beta clamp from PolIII. In Shewanella baltica (strain OS195), this protein is DNA polymerase IV.